A 358-amino-acid polypeptide reads, in one-letter code: MYVARLSTRPLSNPSTAQLSKAAAFFAQSYALPSTKCTAHVPSRRPFTSGAKIQVKGRDLFPEPXHGQIKRTEPAWPHPPYSVEQMRSKVYFAHRKPRDFSDRVALGMVRFLRWCTDFATGYKHNVEAPKTASDSNAVTATKPYQMSERKWLIRYVFLESVAGVPGMVAGMLRHLRSLRGLKRDNGWIETLLEEAYNERMHLLTFLKMYEPGLFMRTMILGAQGVFFNSFFLCYLFSPKTCHRFVGYLEEEAVLTYTLSIQDLENGHLPKWADPNFKAPDLAIEYWGMPEGHRSMRDLLYYIRADEAKHREVNHTLGNLKQDEDPNPFVSVYGKEVADKPGKGIESLRPLGWEREEVI.

The chain crosses the membrane as a helical span at residues 152-172 (LIRYVFLESVAGVPGMVAGML). Positions 159, 198, and 201 each coordinate Fe cation. Residues 218–238 (MILGAQGVFFNSFFLCYLFSP) traverse the membrane as a helical segment. The Fe cation site is built by glutamate 249, glutamate 306, and histidine 309.

This sequence belongs to the alternative oxidase family. The cofactor is Fe cation.

The protein resides in the mitochondrion inner membrane. In terms of biological role, catalyzes cyanide-resistant oxygen consumption. May increase respiration when the cytochrome respiratory pathway is restricted, or in response to low temperatures. This is Alternative oxidase, mitochondrial (AOX1) from Monilinia fructicola (Brown rot fungus).